The primary structure comprises 120 residues: Large ribosomal subunit protein uL18 (120 aa).

This sequence belongs to the universal ribosomal protein uL18 family. In terms of assembly, part of the 50S ribosomal subunit; part of the 5S rRNA/L5/L18/L25 subcomplex. Contacts the 5S and 23S rRNAs.

This is one of the proteins that bind and probably mediate the attachment of the 5S RNA into the large ribosomal subunit, where it forms part of the central protuberance. The sequence is that of Large ribosomal subunit protein uL18 from Methylobacterium nodulans (strain LMG 21967 / CNCM I-2342 / ORS 2060).